The sequence spans 350 residues: MELVALCRTGFEKELAAELVDVTATHGVHGYPKARDGQGYVQFVVDDGAELLRCINAVVFDELVFVRDWFVSAGAISGLPADDRVSPLQNQFKAAFSGHIQEVADLLFLNVDSNEGKALSKLTRGVGSHLKRQLPLAKGSDWLGVLLLLSGSEGFIGVCPRRQRPRWAGGVARLKFPREAPSRATLKLEEAWHHFIPASEWDTRLAPSMKAVDLGAAPGGWTWQLVARSMFVDAVDNGPMAPTLMEGGQVTHRQVDGFAYHPPKPVDWLVCDIADKPARVADMIASWAENSWFREAVFNLKLPMKQRYKEVLRCREQIELRLLAAGRDYRLRFKQLYHDREEVTGHLELR.

Residues 217–220 (APGG), Asp236, Asp256, and Asp272 each bind S-adenosyl-L-methionine. The active-site Proton acceptor is the Lys301.

The protein belongs to the class I-like SAM-binding methyltransferase superfamily. RNA methyltransferase RlmE family. RlmM subfamily. As to quaternary structure, monomer.

It localises to the cytoplasm. It catalyses the reaction cytidine(2498) in 23S rRNA + S-adenosyl-L-methionine = 2'-O-methylcytidine(2498) in 23S rRNA + S-adenosyl-L-homocysteine + H(+). In terms of biological role, catalyzes the 2'-O-methylation at nucleotide C2498 in 23S rRNA. In Teredinibacter turnerae (strain ATCC 39867 / T7901), this protein is Ribosomal RNA large subunit methyltransferase M.